We begin with the raw amino-acid sequence, 211 residues long: N-(5'-phosphoribosyl)anthranilate isomerase (211 aa).

Belongs to the TrpF family.

It carries out the reaction N-(5-phospho-beta-D-ribosyl)anthranilate = 1-(2-carboxyphenylamino)-1-deoxy-D-ribulose 5-phosphate. The protein operates within amino-acid biosynthesis; L-tryptophan biosynthesis; L-tryptophan from chorismate: step 3/5. In Methanococcus maripaludis (strain C6 / ATCC BAA-1332), this protein is N-(5'-phosphoribosyl)anthranilate isomerase.